Here is a 598-residue protein sequence, read N- to C-terminus: Mitochondrial distribution and morphology protein 30 (598 aa).

One can recognise an F-box domain in the interval 13–59; it reads SFTIDHLPPEIWLCISKLVGTSDLHNLCLINRRLYLTITSDEIWKRR.

In terms of assembly, interacts with SKP1. Component of the probable SCF(MDM30) complex containing CDC53, SKP1, RBX1 and MDM30. Interacts with SKP1 and FZO1.

It localises to the cytoplasm. Its subcellular location is the mitochondrion. Its pathway is protein modification; protein ubiquitination. Its function is as follows. Substrate recognition component of a SCF (SKP1-CUL1-F-box protein) E3 ubiquitin-protein ligase complex which mediates the ubiquitination and subsequent proteasomal degradation of target proteins. Probably recognizes and binds to phosphorylated target proteins. Recognizes FZO1 and regulates the amount of FZO1. Regulatory factor for the mitochondrial fusion machinery. Required for mitochondrial DNA maintenance. This is Mitochondrial distribution and morphology protein 30 (MDM30) from Saccharomyces cerevisiae (strain ATCC 204508 / S288c) (Baker's yeast).